The chain runs to 316 residues: Putative HTH-type transcriptional regulatory protein PYRAB03670 (316 aa).

The HTH cro/C1-type domain maps to 131 to 189 (LKDLREKHGYSLSELANILGVSRKSLQRYEKGDSMVTLEVALRLEEVFDEALVKPINVL). The H-T-H motif DNA-binding region spans 142–161 (LSELANILGVSRKSLQRYEK).

The protein is Putative HTH-type transcriptional regulatory protein PYRAB03670 of Pyrococcus abyssi (strain GE5 / Orsay).